Consider the following 213-residue polypeptide: Putative manganese efflux pump MntP (213 aa).

Helical transmembrane passes span 3-23, 36-56, 67-87, 130-150, 152-172, and 187-207; these read ILSI…VSVA, ALKV…IGWG, AFDH…MIFE, LAIA…FLGI, IVQT…LGVI, and IVGG…HTGI.

It belongs to the MntP (TC 9.B.29) family.

Its subcellular location is the cell membrane. In terms of biological role, probably functions as a manganese efflux pump. The chain is Putative manganese efflux pump MntP from Clostridium perfringens (strain 13 / Type A).